Consider the following 677-residue polypeptide: mRNA 3'-end-processing protein RNA14 (677 aa).

HAT repeat units follow at residues 56 to 88 (ESYA…GELA), 90 to 124 (DEFE…YIRR), 138 to 170 (VIVK…FLEQ), 181 to 214 (QRID…WEQE), 257 to 289 (RTAN…WERE), and 298 to 330 (MLSQ…YISE).

As to quaternary structure, component of the CFIA complex, which is composed of RNA14, RNA15, PCF11 and CLP1. Interacts with FIP1, PFS2, YSH1 and probably also with RNA15. Probably interacts with the phosphorylated CTD domain of RPB1/RNA polymerase II.

It localises to the nucleus. Its subcellular location is the cytoplasm. Component of the cleavage factor IA (CFIA) complex, which is involved in the endonucleolytic cleavage during polyadenylation-dependent pre-mRNA 3'-end formation and cooperates with the cleavage factor NAB4/CFIB and the cleavage and polyadenylation factor (CPF) complex. This Saccharomyces cerevisiae (strain ATCC 204508 / S288c) (Baker's yeast) protein is mRNA 3'-end-processing protein RNA14 (RNA14).